The sequence spans 246 residues: MTQPKILVLIPARMASTRLPGKPLLDIAGLPMIVQVLRRAQEANIGRVAVATDTKEIADAVIAHGGEAVMTRPDHPSGSDRIYEASCKLDPAGEAEIVVNLQGDFPTILPQNIRDVLLPLSDPAVDIATLAAQIHTAEEDAAPSVVKAVGSPIGERRLRALYFTRATAPHGDGPRYHHIGLYAYRRAALERFVSLPPSPLELQEKLEQLRALEAGMRIDIGIVDTVPRGVDTPPDLETARRLLSKA.

It belongs to the KdsB family.

The protein localises to the cytoplasm. The catalysed reaction is 3-deoxy-alpha-D-manno-oct-2-ulosonate + CTP = CMP-3-deoxy-beta-D-manno-octulosonate + diphosphate. It functions in the pathway nucleotide-sugar biosynthesis; CMP-3-deoxy-D-manno-octulosonate biosynthesis; CMP-3-deoxy-D-manno-octulosonate from 3-deoxy-D-manno-octulosonate and CTP: step 1/1. The protein operates within bacterial outer membrane biogenesis; lipopolysaccharide biosynthesis. Functionally, activates KDO (a required 8-carbon sugar) for incorporation into bacterial lipopolysaccharide in Gram-negative bacteria. The protein is 3-deoxy-manno-octulosonate cytidylyltransferase of Bradyrhizobium sp. (strain BTAi1 / ATCC BAA-1182).